Consider the following 645-residue polypeptide: Methionine--tRNA ligase (645 aa).

The short motif at 13–23 (YYPSTNLHIGN) is the 'HIGH' region element. Zn(2+)-binding residues include Cys-128, Cys-131, Cys-145, and Cys-148. The 'KMSKS' region signature appears at 298-302 (KMSKS). An ATP-binding site is contributed by Lys-301. A tRNA-binding domain is found at 544-645 (DFDKIDLRVV…GEMLTGSQVR (102 aa)).

Belongs to the class-I aminoacyl-tRNA synthetase family. MetG type 2A subfamily. Homodimer. Zn(2+) is required as a cofactor.

It is found in the cytoplasm. The catalysed reaction is tRNA(Met) + L-methionine + ATP = L-methionyl-tRNA(Met) + AMP + diphosphate. Is required not only for elongation of protein synthesis but also for the initiation of all mRNA translation through initiator tRNA(fMet) aminoacylation. This chain is Methionine--tRNA ligase (metG), found in Clostridium perfringens (strain 13 / Type A).